The chain runs to 183 residues: uncharacterized protein (183 aa).

One can recognise a Macro domain in the interval 1–182; that stretch reads MFRVVHGDIT…VALKVLERDE (182 aa).

This is an uncharacterized protein from Pyrococcus abyssi (strain GE5 / Orsay).